Consider the following 260-residue polypeptide: Snake venom serine protease gussurobin (260 aa).

The first 18 residues, 1 to 18 (MVLIRVLANLLILQLSYA), serve as a signal peptide directing secretion. The propeptide occupies 19-24 (QKSSEL). The Peptidase S1 domain maps to 25–251 (IIGGDECNIN…YTEWIQSTIA (227 aa)). 6 disulfides stabilise this stretch: Cys31-Cys165, Cys52-Cys68, Cys100-Cys258, Cys144-Cys212, Cys176-Cys191, and Cys202-Cys227. Residues His67 and Asp112 each act as charge relay system in the active site. Residues Asn123 and Asn124 are each glycosylated (N-linked (GlcNAc...) asparagine). The Charge relay system role is filled by Ser206.

Belongs to the peptidase S1 family. Snake venom subfamily. As to quaternary structure, monomer. Expressed by the venom gland.

The protein localises to the secreted. Its function is as follows. Snake venom serine protease that may act in the hemostasis system of the prey. The polypeptide is Snake venom serine protease gussurobin (Gloydius ussuriensis (Ussuri mamushi)).